The following is a 125-amino-acid chain: MDCDGLRDDQWERIRGFVPGGTKGKRGPRTNNRLFLDALLWMARSGGRWRDLPERLGDYRAVKRRYYRWIEMGVLDEMLAVLAREADLEWLMIDSTIVRAHQHAAGARRAKGGRMPRAWVGLEAG.

It to transposase of insertion sequence IS6501.

This is an uncharacterized protein from Sinorhizobium fredii (strain NBRC 101917 / NGR234).